Consider the following 372-residue polypeptide: Glutamate 5-kinase (372 aa).

Lysine 14 contributes to the ATP binding site. Serine 54, aspartate 141, and asparagine 153 together coordinate substrate. ATP is bound at residue 173–174 (TD). The 79-residue stretch at 280-358 (RGHVVIDAGA…GEIETVLGYM (79 aa)) folds into the PUA domain.

This sequence belongs to the glutamate 5-kinase family.

The protein localises to the cytoplasm. It carries out the reaction L-glutamate + ATP = L-glutamyl 5-phosphate + ADP. Its pathway is amino-acid biosynthesis; L-proline biosynthesis; L-glutamate 5-semialdehyde from L-glutamate: step 1/2. In terms of biological role, catalyzes the transfer of a phosphate group to glutamate to form L-glutamate 5-phosphate. The chain is Glutamate 5-kinase from Burkholderia mallei (strain NCTC 10229).